The sequence spans 368 residues: 1-aminocyclopropane-1-carboxylate oxidase (368 aa).

The 131-residue stretch at 177 to 307 folds into the Fe2OG dioxygenase domain; it reads PFILMGLLHY…RFSIPFFLDP (131 aa). The segment at 191–226 is disordered; the sequence is HQEQEEEQEDDESNNGGKKSPNPDESKKPEVEKFGT. Positions 194–203 are enriched in acidic residues; sequence QEEEQEDDES. Residues 211–223 show a composition bias toward basic and acidic residues; it reads PNPDESKKPEVEK. Residues H229, D231, and H287 each coordinate Fe cation. 2-oxoglutarate is bound at residue R298.

It belongs to the iron/ascorbate-dependent oxidoreductase family. Fe(2+) serves as cofactor.

The enzyme catalyses 1-aminocyclopropane-1-carboxylate + L-ascorbate + O2 = ethene + L-dehydroascorbate + hydrogen cyanide + CO2 + 2 H2O. Its pathway is alkene biosynthesis; ethylene biosynthesis via S-adenosyl-L-methionine; ethylene from S-adenosyl-L-methionine: step 2/2. Functionally, involved in ethylene biosynthesis. Overexpression induces overproduction of ethylene. This chain is 1-aminocyclopropane-1-carboxylate oxidase (aco), found in Dictyostelium discoideum (Social amoeba).